The primary structure comprises 177 residues: MKLAQDMNVDEIFLKQAAEAIAVISSSPTHTDPIIRELLHRIRQSSPLSAVIPAPENVLKAGEPENMARGLIRIPETQTKRTGGNNHSKEGAQLYSCAKCQLKFSRSSDLRRHEKVHSLVLPHICSNCGKGFARKDALKRHSNTLTCQRNRKKLSEGSDVDVDELIKDAIKNGTGLL.

Residues 95–117 form a C2H2-type zinc finger; sequence YSCAKCQLKFSRSSDLRRHEKVH.

Interacts with MET4 and MET28.

It is found in the cytoplasm. Its subcellular location is the nucleus. Auxiliary transcriptional regulator of sulfur amino acid metabolism. Involved in the transcriptional activation of MET28. This chain is Transcriptional regulator MET31 (MET31), found in Saccharomyces cerevisiae (strain ATCC 204508 / S288c) (Baker's yeast).